The sequence spans 110 residues: Large ribosomal subunit protein uL22 (110 aa).

Belongs to the universal ribosomal protein uL22 family. Part of the 50S ribosomal subunit.

Its function is as follows. This protein binds specifically to 23S rRNA; its binding is stimulated by other ribosomal proteins, e.g. L4, L17, and L20. It is important during the early stages of 50S assembly. It makes multiple contacts with different domains of the 23S rRNA in the assembled 50S subunit and ribosome. The globular domain of the protein is located near the polypeptide exit tunnel on the outside of the subunit, while an extended beta-hairpin is found that lines the wall of the exit tunnel in the center of the 70S ribosome. The sequence is that of Large ribosomal subunit protein uL22 from Actinobacillus pleuropneumoniae serotype 5b (strain L20).